A 277-amino-acid chain; its full sequence is MSSCSRVALVTGANKGIGFAITRDLCRKFSGDVVLTARDEARGRAAVKQLQAEGLSPRFHQLDIDNPQSIRALRDFLRKEYGGLNVLVNNAGIAFRMDDPTPFDVQAEVTLKTNFFATRNVCTELLPIMKPHGRVVNVSSLQGLKALENCSEDLQERFRCDTLTEGDLVDLMKKFVEDTKNEVHEREGWPDSAYGVSKLGVTVLTRILARQLDEKRKADRILLNACCPGWVKTDMARDQGSRTVEEGAETPVYLALLPPDATEPHGQLVRDKVVQTW.

S2 bears the N-acetylserine mark. NADP(+) is bound by residues 10–34, 38–42, 63–64, and N90; these read VTGA…GDVV, RDEAR, and DI. S30 is modified (phosphoserine). S140 contacts substrate. The active-site Proton acceptor is Y194. 194–198 is an NADP(+) binding site; it reads YGVSK.

This sequence belongs to the short-chain dehydrogenases/reductases (SDR) family.

It localises to the cytoplasm. The enzyme catalyses a secondary alcohol + NADP(+) = a ketone + NADPH + H(+). It catalyses the reaction a quinone + NADPH + H(+) = a quinol + NADP(+). Catalyzes the NADPH-dependent reduction of carbonyl compounds to their corresponding alcohols. Has low NADPH-dependent oxidoreductase activity. Acts on several orthoquinones, as well as on non-quinone compounds, such as isatin or on the anticancer drug oracin. Best substrates for CBR3 is 1,2- naphthoquinone, hence could play a role in protection against cytotoxicity of exogenous quinones. Exerts activity toward ortho-quinones but not paraquinones. No endogenous substrate for CBR3 except isatin has been identified. The sequence is that of Carbonyl reductase [NADPH] 3 from Rattus norvegicus (Rat).